Here is a 513-residue protein sequence, read N- to C-terminus: Zinc finger CCCH-type with G patch domain-containing protein (513 aa).

Methionine 1 is modified (N-acetylmethionine). A disordered region spans residues 90-131 (EVPVAPGAELETVPSRETGPGPTERGQEEDDGEDEEGGAALS). The span at 116–126 (QEEDDGEDEEG) shows a compositional bias: acidic residues. Residues 176–202 (KSLKPCSFFLEGKCRFQENCRFSHGQV) form a C3H1-type zinc finger. Residues 267-296 (LPPLRTEPAGSSDSDGSDADDPSYARVVEP) are disordered. Phosphoserine is present on residues serine 278 and serine 355. The 47-residue stretch at 315 to 361 (TRGIGSRLLAKMGYEFGKGLGRHAEGRVEPVHAVVLPRGKSLDQCAE) folds into the G-patch domain. 2 disordered regions span residues 367–394 (TRAGQAGVSKPPKCRSRGSGPGGRPPPR) and 492–513 (AQEAGLQREQRKADTHKKMTEF). Residues 497–513 (LQREQRKADTHKKMTEF) are compositionally biased toward basic and acidic residues.

Interacts with CHD4/Mi-2; the interaction is direct.

Its subcellular location is the nucleus. Transcription repressor that specifically binds the 5'-GGAG[GA]A[GA]A-3' consensus sequence. Represses transcription by recruiting the chromatin multiprotein complex NuRD to target promoters. Negatively regulates expression of EGFR, a gene involved in cell proliferation, survival and migration. Its ability to repress genes of the EGFR pathway suggest it may act as a tumor suppressor. The chain is Zinc finger CCCH-type with G patch domain-containing protein (ZGPAT) from Bos taurus (Bovine).